Here is a 473-residue protein sequence, read N- to C-terminus: Chromosomal replication initiator protein DnaA (473 aa).

A domain I, interacts with DnaA modulators region spans residues 1 to 87 (MADGEESISV…LAVTTFAIVV (87 aa)). The segment at 87-132 (VNPEIQQESLSTVGEPEPTPAPYLDVATFTVAPPAEITAPPRNGDT) is domain II. Residues 133 to 349 (RLNSKYSFDN…GTLIRVTAFA (217 aa)) are domain III, AAA+ region. 4 residues coordinate ATP: Gly177, Gly179, Lys180, and Thr181. A domain IV, binds dsDNA region spans residues 350–473 (SLNRTPVDMP…LTSRIKQNHR (124 aa)).

The protein belongs to the DnaA family. In terms of assembly, oligomerizes as a right-handed, spiral filament on DNA at oriC.

The protein resides in the cytoplasm. In terms of biological role, plays an essential role in the initiation and regulation of chromosomal replication. ATP-DnaA binds to the origin of replication (oriC) to initiate formation of the DNA replication initiation complex once per cell cycle. Binds the DnaA box (a 9 base pair repeat at the origin) and separates the double-stranded (ds)DNA. Forms a right-handed helical filament on oriC DNA; dsDNA binds to the exterior of the filament while single-stranded (ss)DNA is stabiized in the filament's interior. The ATP-DnaA-oriC complex binds and stabilizes one strand of the AT-rich DNA unwinding element (DUE), permitting loading of DNA polymerase. After initiation quickly degrades to an ADP-DnaA complex that is not apt for DNA replication. Binds acidic phospholipids. In Leifsonia xyli subsp. xyli (strain CTCB07), this protein is Chromosomal replication initiator protein DnaA.